A 70-amino-acid polypeptide reads, in one-letter code: MELIATAIIIGLGALGAGIGNGLIVNGTVLGQARQPELKNELRQTMFIGIGLVEALPIIGVAVGFLLLNS.

2 consecutive transmembrane segments (helical) span residues 4 to 24 and 47 to 67; these read IATAIIIGLGALGAGIGNGLI and FIGIGLVEALPIIGVAVGFLL.

This sequence belongs to the ATPase C chain family. In terms of assembly, F-type ATPases have 2 components, F(1) - the catalytic core - and F(0) - the membrane proton channel. F(1) has five subunits: alpha(3), beta(3), gamma(1), delta(1), epsilon(1). F(0) has three main subunits: a(1), b(2) and c(10-14). The alpha and beta chains form an alternating ring which encloses part of the gamma chain. F(1) is attached to F(0) by a central stalk formed by the gamma and epsilon chains, while a peripheral stalk is formed by the delta and b chains.

Its subcellular location is the cell membrane. In terms of biological role, f(1)F(0) ATP synthase produces ATP from ADP in the presence of a proton or sodium gradient. F-type ATPases consist of two structural domains, F(1) containing the extramembraneous catalytic core and F(0) containing the membrane proton channel, linked together by a central stalk and a peripheral stalk. During catalysis, ATP synthesis in the catalytic domain of F(1) is coupled via a rotary mechanism of the central stalk subunits to proton translocation. Its function is as follows. Key component of the F(0) channel; it plays a direct role in translocation across the membrane. A homomeric c-ring of between 10-14 subunits forms the central stalk rotor element with the F(1) delta and epsilon subunits. This chain is ATP synthase subunit c, found in Exiguobacterium sibiricum (strain DSM 17290 / CCUG 55495 / CIP 109462 / JCM 13490 / 255-15).